We begin with the raw amino-acid sequence, 224 residues long: Uridylate kinase (224 aa).

9–10 (GS) is a binding site for ATP. Position 43 (Gly43) interacts with UMP. Gly44 and Arg48 together coordinate ATP. UMP-binding positions include Asp65 and 113–119 (VVPGQTT). 3 residues coordinate ATP: Thr139, Phe145, and Asp148.

Belongs to the UMP kinase family. In terms of assembly, homohexamer.

Its subcellular location is the cytoplasm. It catalyses the reaction UMP + ATP = UDP + ADP. It functions in the pathway pyrimidine metabolism; CTP biosynthesis via de novo pathway; UDP from UMP (UMPK route): step 1/1. With respect to regulation, inhibited by UTP. Its function is as follows. Catalyzes the reversible phosphorylation of UMP to UDP. This is Uridylate kinase from Methanocella arvoryzae (strain DSM 22066 / NBRC 105507 / MRE50).